We begin with the raw amino-acid sequence, 75 residues long: Conotoxin TsMEKL-011 (75 aa).

The first 19 residues, 1–19 (MEKLTILLLVAAVLMSTQA), serve as a signal peptide directing secretion. Positions 20–45 (LIQRGGAKRRKVNFFSIREPGAEDWR) are excised as a propeptide. 3 disulfides stabilise this stretch: cysteine 49-cysteine 63, cysteine 56-cysteine 67, and cysteine 62-cysteine 71.

This sequence belongs to the conotoxin O2 superfamily. Expressed by the venom duct.

Its subcellular location is the secreted. This is Conotoxin TsMEKL-011 from Conus tessulatus (Tessellate cone).